The following is a 128-amino-acid chain: Iron-sulfur cluster insertion protein ErpA (128 aa).

Residues Cys56, Cys120, and Cys122 each coordinate iron-sulfur cluster.

Belongs to the HesB/IscA family. In terms of assembly, homodimer. The cofactor is iron-sulfur cluster.

Required for insertion of 4Fe-4S clusters for at least IspG. This Xanthomonas euvesicatoria pv. vesicatoria (strain 85-10) (Xanthomonas campestris pv. vesicatoria) protein is Iron-sulfur cluster insertion protein ErpA.